The sequence spans 469 residues: Argininosuccinate lyase (469 aa).

It belongs to the lyase 1 family. Argininosuccinate lyase subfamily.

It localises to the cytoplasm. The enzyme catalyses 2-(N(omega)-L-arginino)succinate = fumarate + L-arginine. Its pathway is amino-acid biosynthesis; L-arginine biosynthesis; L-arginine from L-ornithine and carbamoyl phosphate: step 3/3. This is Argininosuccinate lyase from Saccharophagus degradans (strain 2-40 / ATCC 43961 / DSM 17024).